The following is a 340-amino-acid chain: Mitochondrial glycine transporter (340 aa).

Solcar repeat units follow at residues 23–108, 128–218, and 237–325; these read PKTL…ARNG, LSPF…FKND, and RSTI…LIKS. A run of 6 helical transmembrane segments spans residues 29-54, 83-109, 134-159, 193-216, 241-267, and 300-318; these read LISG…TRLQ, GALP…RNGI, LATG…TRYE, GSFA…ELFK, INTS…KTRL, and GLSL…SWCI.

It belongs to the mitochondrial carrier (TC 2.A.29) family. SLC25A38 subfamily.

Its subcellular location is the mitochondrion inner membrane. It carries out the reaction glycine(in) = glycine(out). Its function is as follows. Mitochondrial glycine transporter that imports glycine into the mitochondrial matrix. Plays an important role in providing glycine for the first enzymatic step in heme biosynthesis, the condensation of glycine with succinyl-CoA to produce 5-aminolevulinate (ALA) in the mitochondrial matrix. This chain is Mitochondrial glycine transporter, found in Debaryomyces hansenii (strain ATCC 36239 / CBS 767 / BCRC 21394 / JCM 1990 / NBRC 0083 / IGC 2968) (Yeast).